Reading from the N-terminus, the 1074-residue chain is Formin-G (1074 aa).

The 390-residue stretch at 34 to 423 (LQMQQGSKTY…DKINEFEKKI (390 aa)) folds into the GBD/FH3 domain. Disordered stretches follow at residues 476-507 (QSIS…DIQS) and 549-639 (FTPT…NPSS). Residues 481-503 (SQDSSNNQKASSSSSNTSTLNDS) are compositionally biased toward low complexity. A coiled-coil region spans residues 502-530 (DSDIQSIQSSLKEATLEIERLKLAIEEKM). A compositionally biased stretch (polar residues) spans 549–561 (FTPTSPDISNDGQ). Pro residues predominate over residues 568–610 (APPPSPSPPPPISGGGAPPPPPPPPPPPSGGGAPPPPPPPPPS). The FH1 domain occupies 597-623 (GGGAPPPPPPPPPSGGKKAGAPGAPPT). One can recognise an FH2 domain in the interval 631–1031 (NKPVINPSSK…ASGDNGAVQN (401 aa)). Residues 914 to 971 (DINDLEKQFNISKNNCKKVLEANIPSSSKFQSTIGSFLEKTEIDIKNLKENQKNIVDS) adopt a coiled-coil conformation. The DAD domain maps to 1037-1073 (GADPLAALANAIKLGQTGLRKRPGPENSSGGSQLNLN). The disordered stretch occupies residues 1053–1074 (TGLRKRPGPENSSGGSQLNLNK). Polar residues predominate over residues 1062–1074 (ENSSGGSQLNLNK).

This sequence belongs to the formin homology family. Diaphanous subfamily. As to quaternary structure, interacts (via GBD/FH3 domain) with activated Rho-GTPases.

Its function is as follows. Formins play an important role in the nucleation of actin and the formation of linear actin filaments. In Dictyostelium discoideum (Social amoeba), this protein is Formin-G (forG).